Reading from the N-terminus, the 1010-residue chain is Regulator of telomere elongation helicase 1 homolog (1010 aa).

The Helicase ATP-binding domain occupies 7-333; that stretch reads NGITVNFPFE…KEMLLQLEKT (327 aa). ATP is bound at residue 42–49; the sequence is SPTGTGKT. [4Fe-4S] cluster-binding residues include Cys-157, Cys-175, Cys-184, and Cys-220. Residues 263–266 carry the DEAH box motif; that stretch reads DEAH. Residues 912-931 are disordered; that stretch reads TSDDEDPGRTGDDPTRQAPE. Basic and acidic residues predominate over residues 918–931; the sequence is PGRTGDDPTRQAPE.

This sequence belongs to the helicase family. RAD3/XPD subfamily.

Its subcellular location is the nucleus. It carries out the reaction ATP + H2O = ADP + phosphate + H(+). In terms of biological role, a probable ATP-dependent DNA helicase implicated in DNA repair and the maintenance of genomic stability. Acts as an anti-recombinase to counteract toxic recombination and limit crossover during meiosis. Regulates meiotic recombination and crossover homeostasis by physically dissociating strand invasion events and thereby promotes noncrossover repair by meiotic synthesis dependent strand annealing (SDSA) as well as disassembly of D loop recombination intermediates. The sequence is that of Regulator of telomere elongation helicase 1 homolog from Aedes aegypti (Yellowfever mosquito).